The sequence spans 276 residues: 2-dehydro-3-deoxyphosphooctonate aldolase (276 aa).

Belongs to the KdsA family.

It is found in the cytoplasm. It catalyses the reaction D-arabinose 5-phosphate + phosphoenolpyruvate + H2O = 3-deoxy-alpha-D-manno-2-octulosonate-8-phosphate + phosphate. It functions in the pathway carbohydrate biosynthesis; 3-deoxy-D-manno-octulosonate biosynthesis; 3-deoxy-D-manno-octulosonate from D-ribulose 5-phosphate: step 2/3. It participates in bacterial outer membrane biogenesis; lipopolysaccharide biosynthesis. This chain is 2-dehydro-3-deoxyphosphooctonate aldolase, found in Xanthomonas euvesicatoria pv. vesicatoria (strain 85-10) (Xanthomonas campestris pv. vesicatoria).